A 155-amino-acid chain; its full sequence is SsrA-binding protein (155 aa).

The protein belongs to the SmpB family.

The protein localises to the cytoplasm. Functionally, required for rescue of stalled ribosomes mediated by trans-translation. Binds to transfer-messenger RNA (tmRNA), required for stable association of tmRNA with ribosomes. tmRNA and SmpB together mimic tRNA shape, replacing the anticodon stem-loop with SmpB. tmRNA is encoded by the ssrA gene; the 2 termini fold to resemble tRNA(Ala) and it encodes a 'tag peptide', a short internal open reading frame. During trans-translation Ala-aminoacylated tmRNA acts like a tRNA, entering the A-site of stalled ribosomes, displacing the stalled mRNA. The ribosome then switches to translate the ORF on the tmRNA; the nascent peptide is terminated with the 'tag peptide' encoded by the tmRNA and targeted for degradation. The ribosome is freed to recommence translation, which seems to be the essential function of trans-translation. This is SsrA-binding protein from Bacillus cereus (strain ATCC 10987 / NRS 248).